The sequence spans 791 residues: MKFIKRKTKLLTITIGAVAVSSILLGGIFYGTSQKSPSSFGIASIDQKENFINKDNLDYQKARPSIKDNNLKEIPKPKPQPKPEPQPTPFPDPIPTPPKKEELKKPEIKPEEPKKPEIKPEPIPKPKPQPIPQPTPPVETKPKEELLPPSPPPPKEEPKPEPDPQPQPQQIPNQSTVRKIELNGVLVDAEVEVPPPRQTFKYDQDNGLSNLNPYTNISVGKIKKVFVTDELRHKSADLVRGNLKRGDYQSLVKDLLDPNIKPEEIDSYIAMVDKSGYHAKLWSKFKKLFDTDNVVNFLNEQGKKEYPNMKTKFVSDAHKYAWLYAHLDFSKFTKLSANSEKYLQEGLTPDPDNSYVNENGELDSYAYSPAKEYNTVTSRLANDNANRRVFGYNEWYNRSPNGLANGDYPGWNKSDATAEFKQYGIKDGDGIKVYKLERQKPQEGKLNTGYIVDIDADNPDGYQKTKELIQKLNNQNKKITGYRIRNMGKSDSGQKFSDILKALPNELPLLELFFSAGSHNTSALSALETKHIKELGLYTLGNSLLDEWSINPNALRKVEWINSNDYNVSSEYKQGSDIATRITFDTLSFDKNDFNDNANDLRTKLKRINDGLRMVYWTRNNEPFFQGGFGPGLDPDHKEVGNSYPQGLDFSRVPQIRSLRGLIFKDEQKASNNRERKLRRVNFFNDKENYEMSINDLNEAGFSEHIVTNEPMPPKSKITFSNGNATKRIYIKGNGSLTASGIQNLATLFNLAESLDSKSVVVDSNNSELKSQLEGLGYKVSDASDANYIDI.

The chain crosses the membrane as a helical span at residues 10-30 (LLTITIGAVAVSSILLGGIFY). Positions 56–76 (NLDYQKARPSIKDNNLKEIPK) are enriched in basic and acidic residues. A disordered region spans residues 56–175 (NLDYQKARPS…PQPQQIPNQS (120 aa)). Residues 77 to 97 (PKPQPKPEPQPTPFPDPIPTP) are compositionally biased toward pro residues. Residues 98–124 (PKKEELKKPEIKPEEPKKPEIKPEPIP) are compositionally biased toward basic and acidic residues. Over residues 125–139 (KPKPQPIPQPTPPVE) the composition is skewed to pro residues.

To U.parvum UU044.

The protein resides in the membrane. This is an uncharacterized protein from Ureaplasma parvum serovar 3 (strain ATCC 700970).